The following is a 458-amino-acid chain: tRNA modification GTPase MnmE (458 aa).

3 residues coordinate (6S)-5-formyl-5,6,7,8-tetrahydrofolate: Arg-22, Glu-86, and Arg-125. In terms of domain architecture, TrmE-type G spans 221–379; that stretch reads GIRTVILGRP…LEQTITEMFF (159 aa). Asn-231 serves as a coordination point for K(+). Residues 231 to 236, 250 to 256, and 275 to 278 contribute to the GTP site; these read NAGKSS, TEIAGTT, and DTAG. Ser-235 provides a ligand contact to Mg(2+). 3 residues coordinate K(+): Thr-250, Ile-252, and Thr-255. Position 256 (Thr-256) interacts with Mg(2+). Residue Lys-458 participates in (6S)-5-formyl-5,6,7,8-tetrahydrofolate binding.

Belongs to the TRAFAC class TrmE-Era-EngA-EngB-Septin-like GTPase superfamily. TrmE GTPase family. As to quaternary structure, homodimer. Heterotetramer of two MnmE and two MnmG subunits. K(+) is required as a cofactor.

It is found in the cytoplasm. In terms of biological role, exhibits a very high intrinsic GTPase hydrolysis rate. Involved in the addition of a carboxymethylaminomethyl (cmnm) group at the wobble position (U34) of certain tRNAs, forming tRNA-cmnm(5)s(2)U34. The polypeptide is tRNA modification GTPase MnmE (Lachnoclostridium phytofermentans (strain ATCC 700394 / DSM 18823 / ISDg) (Clostridium phytofermentans)).